Here is a 122-residue protein sequence, read N- to C-terminus: Iron-sulfur cluster assembly protein SufA (122 aa).

Cys50, Cys114, and Cys116 together coordinate [2Fe-2S] cluster. Cys50, Cys114, and Cys116 together coordinate [4Fe-4S] cluster.

The protein belongs to the HesB/IscA family. In terms of assembly, homodimer. Interacts with SufB and SufC.

Member of gene cluster sufABCDSE that mediates iron-sulfur cluster assembly under oxidative stress and iron limitation conditions. Binds [2Fe-2S] and [4Fe-4S] clusters by mobilizing sulfur atoms provided by the SufS-SufE cysteine desulfurase system and then transfers the assembled Fe-S clusters to target proteins including ferredoxin and aconitase. Seems to act as a Fe-S cluster carrier rather than a scaffold, this role being performed by SufB and SufC. The sequence is that of Iron-sulfur cluster assembly protein SufA (sufA) from Escherichia coli (strain K12).